The following is a 311-amino-acid chain: Transcription initiation factor IIB (311 aa).

The segment at 11-42 (KETKCPECGSTKLINDHERGEVVCGACGLVID) adopts a TFIIB-type zinc-finger fold. Zn(2+) is bound by residues C15, C18, C34, and C37. A run of 2 repeats spans residues 128–211 (SELD…TREL) and 222–303 (DYVP…ELTE).

This sequence belongs to the TFIIB family.

Functionally, stabilizes TBP binding to an archaeal box-A promoter. Also responsible for recruiting RNA polymerase II to the pre-initiation complex (DNA-TBP-TFIIB). This Methanosphaera stadtmanae (strain ATCC 43021 / DSM 3091 / JCM 11832 / MCB-3) protein is Transcription initiation factor IIB.